The following is a 257-amino-acid chain: Triosephosphate isomerase (257 aa).

Asn11 and Lys13 together coordinate substrate. His96 (electrophile) is an active-site residue. Glu170 acts as the Proton acceptor in catalysis.

The protein belongs to the triosephosphate isomerase family. In terms of assembly, homodimer.

It carries out the reaction D-glyceraldehyde 3-phosphate = dihydroxyacetone phosphate. Its pathway is carbohydrate biosynthesis; gluconeogenesis. It participates in carbohydrate degradation; glycolysis; D-glyceraldehyde 3-phosphate from glycerone phosphate: step 1/1. The protein is Triosephosphate isomerase of Giardia intestinalis (Giardia lamblia).